A 201-amino-acid chain; its full sequence is Retinol-binding protein 4 (201 aa).

Positions 1-18 (MKWVWALLLLAALGSGRA) are cleaved as a signal peptide. Cystine bridges form between Cys-22/Cys-178, Cys-88/Cys-192, and Cys-138/Cys-147. Gln-116 lines the substrate pocket. Arg-139 carries the post-translational modification Omega-N-methylarginine.

Belongs to the calycin superfamily. Lipocalin family. Interacts with TTR. Interaction with TTR prevents its loss by filtration through the kidney glomeruli. Interacts with STRA6. In terms of tissue distribution, detected in blood plasma and in urine (at protein level).

The protein localises to the secreted. Its function is as follows. Retinol-binding protein that mediates retinol transport in blood plasma. Delivers retinol from the liver stores to the peripheral tissues. Transfers the bound all-trans retinol to STRA6, that then facilitates retinol transport across the cell membrane. This is Retinol-binding protein 4 (RBP4) from Homo sapiens (Human).